Reading from the N-terminus, the 161-residue chain is ATP synthase subunit b 2 (161 aa).

The chain crosses the membrane as a helical span at residues 13-33 (IVWLVIALVAMYFVMSRLAIP).

It belongs to the ATPase B chain family. In terms of assembly, F-type ATPases have 2 components, F(1) - the catalytic core - and F(0) - the membrane proton channel. F(1) has five subunits: alpha(3), beta(3), gamma(1), delta(1), epsilon(1). F(0) has three main subunits: a(1), b(2) and c(10-14). The alpha and beta chains form an alternating ring which encloses part of the gamma chain. F(1) is attached to F(0) by a central stalk formed by the gamma and epsilon chains, while a peripheral stalk is formed by the delta and b chains.

Its subcellular location is the cell inner membrane. F(1)F(0) ATP synthase produces ATP from ADP in the presence of a proton or sodium gradient. F-type ATPases consist of two structural domains, F(1) containing the extramembraneous catalytic core and F(0) containing the membrane proton channel, linked together by a central stalk and a peripheral stalk. During catalysis, ATP synthesis in the catalytic domain of F(1) is coupled via a rotary mechanism of the central stalk subunits to proton translocation. Functionally, component of the F(0) channel, it forms part of the peripheral stalk, linking F(1) to F(0). The b'-subunit is a diverged and duplicated form of b found in plants and photosynthetic bacteria. The chain is ATP synthase subunit b 2 (atpF2) from Rhodospirillum rubrum (strain ATCC 11170 / ATH 1.1.1 / DSM 467 / LMG 4362 / NCIMB 8255 / S1).